A 106-amino-acid chain; its full sequence is A-type ATP synthase subunit F (106 aa).

It belongs to the V-ATPase F subunit family. Has multiple subunits with at least A(3), B(3), C, D, E, F, H, I and proteolipid K(x).

Its subcellular location is the cell membrane. Its function is as follows. Component of the A-type ATP synthase that produces ATP from ADP in the presence of a proton gradient across the membrane. This is A-type ATP synthase subunit F from Methanosphaera stadtmanae (strain ATCC 43021 / DSM 3091 / JCM 11832 / MCB-3).